The following is a 651-amino-acid chain: UvrABC system protein C (651 aa).

Positions 20 to 97 (ERCGVYRMFD…IKKFQPKFNI (78 aa)) constitute a GIY-YIG domain. The region spanning 207 to 242 (KALQENLSKKMEELSSQMRFEEAAEIRDRIKALSYV) is the UVR domain.

Belongs to the UvrC family. Interacts with UvrB in an incision complex.

It is found in the cytoplasm. Its function is as follows. The UvrABC repair system catalyzes the recognition and processing of DNA lesions. UvrC both incises the 5' and 3' sides of the lesion. The N-terminal half is responsible for the 3' incision and the C-terminal half is responsible for the 5' incision. In Rickettsia akari (strain Hartford), this protein is UvrABC system protein C.